The chain runs to 621 residues: Chaperone protein dnaK (621 aa).

The segment at 597–621 is disordered; sequence VYSSTQQDNSKTEDGSVIDTNSKEA.

Belongs to the heat shock protein 70 family.

Its subcellular location is the plastid. The protein localises to the chloroplast. Acts as a chaperone. The sequence is that of Chaperone protein dnaK from Gracilaria tenuistipitata var. liui (Red alga).